A 378-amino-acid polypeptide reads, in one-letter code: Ribosomal RNA large subunit methyltransferase G (378 aa).

Belongs to the methyltransferase superfamily. RlmG family.

It is found in the cytoplasm. The catalysed reaction is guanosine(1835) in 23S rRNA + S-adenosyl-L-methionine = N(2)-methylguanosine(1835) in 23S rRNA + S-adenosyl-L-homocysteine + H(+). Specifically methylates the guanine in position 1835 (m2G1835) of 23S rRNA. This is Ribosomal RNA large subunit methyltransferase G from Shewanella putrefaciens (strain CN-32 / ATCC BAA-453).